Reading from the N-terminus, the 86-residue chain is Large ribosomal subunit protein bL28 (86 aa).

This sequence belongs to the bacterial ribosomal protein bL28 family.

The protein is Large ribosomal subunit protein bL28 of Phocaeicola vulgatus (strain ATCC 8482 / DSM 1447 / JCM 5826 / CCUG 4940 / NBRC 14291 / NCTC 11154) (Bacteroides vulgatus).